The chain runs to 560 residues: MELPAVGEHVFAVESIEKKRIRKGRVEYLVKWRGWSPKYNTWEPEENILDPRLLIAFQNRERQEQLMGYRKRGPKPKPLVVQVPTFARRSNVLTGLQDSSTDNRAKLDLGAQGKGQGHQYELNSKKHHQYQPHSKERAGKPPPPGKSGKYYYQLNSKKHHPYQPDPKMYDLQYQGGHKEAPSPTCPDLGAKSHPPDKWAQGAGAKGYLGAVKPLAGAAGAPGKGSEKGPPNGMMPAPKEAVTGNGIGGKMKIVKNKNKNGRIVIVMSKYMENGMQAVKIKSGEVAEGEARSPSHKKRAADERHPPADRTFKKAAGAEEKKVEAPPKRREEEVSGVSDPQPQDAGSRKLSPTKEAFGEQPLQLTTKPDLLAWDPARNTHPPSHHPHPHPHHHHHHHHHHHHAVGLNLSHVRKRCLSETHGEREPCKKRLTARSISTPTCLGGSPAAERPADLPPAAALPQPEVILLDSDLDEPIDLRCVKTRSEAGEPPSSLQVKPETPASAAVAVAAAAAPTTTAEKPPAEAQDEPAESLSEFKPFFGNIIITDVTANCLTVTFKEYVTV.

Residues 1–75 (MELPAVGEHV…LMGYRKRGPK (75 aa)) are involved in interaction with H3C15 and H3C1. Residues 1-539 (MELPAVGEHV…LSEFKPFFGN (539 aa)) form an interaction with BMI1 region. A Chromo domain is found at 11–69 (FAVESIEKKRIRKGRVEYLVKWRGWSPKYNTWEPEENILDPRLLIAFQNRERQEQLMGY). Residues Lys-77, Lys-106, Lys-114, and Lys-125 each participate in a glycyl lysine isopeptide (Lys-Gly) (interchain with G-Cter in SUMO2) cross-link. The interval 92-152 (VLTGLQDSST…PPGKSGKYYY (61 aa)) is disordered. N6-acetyllysine; alternate is present on Lys-149. A Glycyl lysine isopeptide (Lys-Gly) (interchain with G-Cter in SUMO2); alternate cross-link involves residue Lys-149. Glycyl lysine isopeptide (Lys-Gly) (interchain with G-Cter in SUMO2) cross-links involve residues Lys-157, Lys-167, and Lys-178. Ser-182 is subject to Phosphoserine. Glycyl lysine isopeptide (Lys-Gly) (interchain with G-Cter in SUMO2) cross-links involve residues Lys-191, Lys-205, Lys-212, Lys-223, Lys-249, Lys-268, Lys-278, and Lys-280. The segment at 217–243 (AAGAPGKGSEKGPPNGMMPAPKEAVTG) is disordered. Basic and acidic residues-rich tracts occupy residues 281 to 291 (SGEVAEGEARS) and 298 to 331 (AADE…REEE). The interval 281–404 (SGEVAEGEAR…HHHHHHAVGL (124 aa)) is disordered. Glycyl lysine isopeptide (Lys-Gly) (interchain with G-Cter in SUMO2) cross-links involve residues Lys-320, Lys-352, and Lys-365. Basic residues predominate over residues 380–401 (PSHHPHPHPHHHHHHHHHHHHA). At Ser-467 the chain carries Phosphoserine. Lys-494 is covalently cross-linked (Glycyl lysine isopeptide (Lys-Gly) (interchain with G-Cter in SUMO2); alternate). Residue Lys-494 forms a Glycyl lysine isopeptide (Lys-Gly) (interchain with G-Cter in SUMO); alternate linkage. Residue Thr-497 is modified to Phosphothreonine; by HIPK2. Positions 509–521 (AAPTTTAEKPPAE) are enriched in low complexity. The segment at 509 to 528 (AAPTTTAEKPPAEAQDEPAE) is disordered. Positions 531–556 (SEFKPFFGNIIITDVTANCLTVTFKE) are involved in interaction with H3C15 and RNF2. An interaction with RNF2 region spans residues 540–560 (IIITDVTANCLTVTFKEYVTV).

In terms of assembly, interacts with histone H3-K9Me3. Interacts with CHTOP. Component of a PRC1-like complex. The composition of the PRC1 complex differs between the PRC1 complex in pluripotent embryonic stem cells containing RNF2, CBX7 and PCGF2, and the PRC1 complex in differentiating cells containing RNF2, CBX2, CBX4 and BMI1. Self-associates. Interacts with SUV39H1 and HIPK2. Interacts with CSNK2B. May interact with H3C15, H3C1 and RNF2. Interacts with SUMO1P1/SUMO5. Interacts with PRDM1/Blimp-1. Post-translationally, ubiquitinated. Ubiquitination regulates the function of the Polycomb group (PcG) multiprotein PRC1-like complex. Deubiquitinated by USP26. In terms of processing, phosphorylated on Thr-497 by HIPK2 upon DNA damage. This phosphorylation stimulates E3 SUMO-protein ligase activity and promotes sumoylation on Lys-494, as well as sumoylation of other target proteins, such as HNRNPK. Ubiquitous.

It localises to the nucleus. It is found in the nucleus speckle. It functions in the pathway protein modification; protein sumoylation. Functionally, E3 SUMO-protein ligase that catalyzes sumoylation of target proteins by promoting the transfer of SUMO from the E2 enzyme to the substrate. Involved in the sumoylation of HNRNPK, a p53/TP53 transcriptional coactivator, hence indirectly regulates p53/TP53 transcriptional activation resulting in p21/CDKN1A expression. Monosumoylates ZNF131. Its function is as follows. Component of a Polycomb group (PcG) multiprotein PRC1-like complex, a complex class required to maintain the transcriptionally repressive state of many genes, including Hox genes, throughout development. PcG PRC1 complex acts via chromatin remodeling and modification of histones; it mediates monoubiquitination of histone H2A 'Lys-119', rendering chromatin heritably changed in its expressibility. Binds to histone H3 trimethylated at 'Lys-9' (H3K9me3). Plays a role in the lineage differentiation of the germ layers in embryonic development. The sequence is that of E3 SUMO-protein ligase CBX4 (CBX4) from Homo sapiens (Human).